Reading from the N-terminus, the 338-residue chain is MIDFKAIIAKVATGATLTRDEAASAFDGMMSGDATPSQMGALLMGLRVRGETVDEITGAVSTMRAKMLTVDAPADAVDIVGTGGDGSGSVNVSTCASFIVAGCGVPVAKHGNRALSSKSGAADVLNALGVRIDITPEHVGRCVTEAGIGFMFAPTHHPAMKNVGPTRVELATRTIFNLLGPLSNPAGVKRQMIGVFSRQWVQPLAQVLKNLGSESIWVVHGSDGLDEITLSGPTAVAELKNGEIRTFEVTPDEAGLPRAHAEALRGGDAEANAVALRSVLEGMPSPYRDVALLNAAAALVVAGKAKDLKEGVALGAKSIDSGAAEGRLRRLIAVTAAG.

Residues glycine 81, 84–85 (GD), serine 89, 91–94 (NVST), 109–117 (KHGNRALSS), and alanine 121 contribute to the 5-phospho-alpha-D-ribose 1-diphosphate site. Glycine 81 lines the anthranilate pocket. Residue serine 93 coordinates Mg(2+). Position 112 (asparagine 112) interacts with anthranilate. Arginine 167 lines the anthranilate pocket. Aspartate 226 and glutamate 227 together coordinate Mg(2+).

Belongs to the anthranilate phosphoribosyltransferase family. In terms of assembly, homodimer. Mg(2+) serves as cofactor.

The enzyme catalyses N-(5-phospho-beta-D-ribosyl)anthranilate + diphosphate = 5-phospho-alpha-D-ribose 1-diphosphate + anthranilate. It functions in the pathway amino-acid biosynthesis; L-tryptophan biosynthesis; L-tryptophan from chorismate: step 2/5. Functionally, catalyzes the transfer of the phosphoribosyl group of 5-phosphorylribose-1-pyrophosphate (PRPP) to anthranilate to yield N-(5'-phosphoribosyl)-anthranilate (PRA). The chain is Anthranilate phosphoribosyltransferase from Rhodopseudomonas palustris (strain BisB5).